We begin with the raw amino-acid sequence, 168 residues long: MATAYHNLSDYDFNSVPNAENMRFGIVVSEWNNNITGPLLEGAISTLKKHGAKDKNILVQTVPGSFELTFGSAQMIKSGKVDAVIAIGCVVRGDTPHFDYVCAGTTQGIAQLNAEGDIPVIYGLITTNTMQQAEDRAGGRLGNKGDECAITAIKMLDFKEKLQKTQIF.

5-amino-6-(D-ribitylamino)uracil-binding positions include tryptophan 31, 65 to 67 (SFE), and 89 to 91 (CVV). 94-95 (DT) lines the (2S)-2-hydroxy-3-oxobutyl phosphate pocket. The active-site Proton donor is histidine 97. Tyrosine 122 is a binding site for 5-amino-6-(D-ribitylamino)uracil. Arginine 136 is a (2S)-2-hydroxy-3-oxobutyl phosphate binding site.

The protein belongs to the DMRL synthase family.

The catalysed reaction is (2S)-2-hydroxy-3-oxobutyl phosphate + 5-amino-6-(D-ribitylamino)uracil = 6,7-dimethyl-8-(1-D-ribityl)lumazine + phosphate + 2 H2O + H(+). It functions in the pathway cofactor biosynthesis; riboflavin biosynthesis; riboflavin from 2-hydroxy-3-oxobutyl phosphate and 5-amino-6-(D-ribitylamino)uracil: step 1/2. Catalyzes the formation of 6,7-dimethyl-8-ribityllumazine by condensation of 5-amino-6-(D-ribitylamino)uracil with 3,4-dihydroxy-2-butanone 4-phosphate. This is the penultimate step in the biosynthesis of riboflavin. This is 6,7-dimethyl-8-ribityllumazine synthase from Phocaeicola vulgatus (strain ATCC 8482 / DSM 1447 / JCM 5826 / CCUG 4940 / NBRC 14291 / NCTC 11154) (Bacteroides vulgatus).